Consider the following 136-residue polypeptide: Large ribosomal subunit protein bL17 (136 aa).

The protein belongs to the bacterial ribosomal protein bL17 family. In terms of assembly, part of the 50S ribosomal subunit. Contacts protein L32.

This chain is Large ribosomal subunit protein bL17, found in Rhodopseudomonas palustris (strain BisB5).